The primary structure comprises 478 residues: uncharacterized protein (478 aa).

The ATP-grasp domain occupies 174–366 (RQVLAAAGVP…LIGEHIKLAI (193 aa)). 214–219 (GSGSRG) is a binding site for ATP. The active site involves R339.

This is an uncharacterized protein from Sinorhizobium fredii (strain NBRC 101917 / NGR234).